Reading from the N-terminus, the 585-residue chain is Squalene epoxidase 2, mitochondrial (585 aa).

The N-terminal 45 residues, 1–45, are a transit peptide targeting the mitochondrion; sequence MKPFVIRNLPRFQSTLRSSLLYTNHRPSSRFSLSTRRFTTGATYI. A helical transmembrane segment spans residues 70–90; it reads AKIALDQFIASLFTFLLLYIL. FAD-binding positions include 132–133, 152–153, R160, R231, V247, D409, and M422; these read VA and ER. The next 3 helical transmembrane spans lie at 493-513, 520-540, and 545-565; these read FDYL…LSGL, LVLH…LPFP, and FWLG…IIKA.

This sequence belongs to the squalene monooxygenase family. FAD is required as a cofactor. Expressed mainly in inflorescences. Detected in seedlings, leaves, stems, and siliques.

The protein resides in the mitochondrion membrane. It carries out the reaction squalene + reduced [NADPH--hemoprotein reductase] + O2 = (S)-2,3-epoxysqualene + oxidized [NADPH--hemoprotein reductase] + H2O + H(+). Its pathway is terpene metabolism; lanosterol biosynthesis; lanosterol from farnesyl diphosphate: step 2/3. Its function is as follows. Catalyzes the stereospecific oxidation of squalene to (S)-2,3-epoxysqualene, and is considered to be a rate-limiting enzyme in steroid biosynthesis. Produces primarily oxidosqualene. This chain is Squalene epoxidase 2, mitochondrial (SQE2), found in Arabidopsis thaliana (Mouse-ear cress).